The sequence spans 223 residues: Small ribosomal subunit protein uS3 (223 aa).

In terms of domain architecture, KH type-2 spans 39–117 (IREHLRKKPS…RPELNAKLVA (79 aa)).

Belongs to the universal ribosomal protein uS3 family. Part of the 30S ribosomal subunit. Forms a tight complex with proteins S10 and S14.

Binds the lower part of the 30S subunit head. Binds mRNA in the 70S ribosome, positioning it for translation. The sequence is that of Small ribosomal subunit protein uS3 from Chlamydia felis (strain Fe/C-56) (Chlamydophila felis).